The chain runs to 129 residues: Small ribosomal subunit protein uS8 (129 aa).

Belongs to the universal ribosomal protein uS8 family. Part of the 30S ribosomal subunit. Contacts proteins S5 and S12.

In terms of biological role, one of the primary rRNA binding proteins, it binds directly to 16S rRNA central domain where it helps coordinate assembly of the platform of the 30S subunit. The protein is Small ribosomal subunit protein uS8 of Mycoplasma mycoides subsp. mycoides SC (strain CCUG 32753 / NCTC 10114 / PG1).